Reading from the N-terminus, the 203-residue chain is NADH-quinone oxidoreductase subunit C (203 aa).

Belongs to the complex I 30 kDa subunit family. In terms of assembly, NDH-1 is composed of 14 different subunits. Subunits NuoB, C, D, E, F, and G constitute the peripheral sector of the complex.

It is found in the cell inner membrane. The catalysed reaction is a quinone + NADH + 5 H(+)(in) = a quinol + NAD(+) + 4 H(+)(out). Its function is as follows. NDH-1 shuttles electrons from NADH, via FMN and iron-sulfur (Fe-S) centers, to quinones in the respiratory chain. The immediate electron acceptor for the enzyme in this species is believed to be ubiquinone. Couples the redox reaction to proton translocation (for every two electrons transferred, four hydrogen ions are translocated across the cytoplasmic membrane), and thus conserves the redox energy in a proton gradient. This chain is NADH-quinone oxidoreductase subunit C, found in Polaromonas sp. (strain JS666 / ATCC BAA-500).